Reading from the N-terminus, the 352-residue chain is Poly(A)+ RNA export protein (352 aa).

WD repeat units follow at residues 28–58 (PPEDSISDLAFSPQAEYLAASSWDSKVRIYE), 72–102 (EHQGPVLSVNWSRDGTKVASGSVDKSAKVFD), 113–146 (AHDDAVRCVRFVEAMGTSPILATGSWDKTLKYWD), 192–229 (IFKLAMSPLKFQTRSLACFIKGDGYAIGSVEGRCAIQN), and 252–282 (ADVYSVNSIAFHPQYGTFSTAGSDGTFSFWD).

The protein belongs to the WD repeat rae1 family. In terms of assembly, interacts with rpn15/dss1 and uap56.

Its subcellular location is the nucleus. Functionally, required for mitotic cell growth as well as for spore germination. Functions in cell cycle progression through trafficking of proteins required for mitosis. Has a role in the mRNA export process. In Schizosaccharomyces pombe (strain 972 / ATCC 24843) (Fission yeast), this protein is Poly(A)+ RNA export protein (rae1).